We begin with the raw amino-acid sequence, 286 residues long: Bifunctional protein FolD (286 aa).

Residues 166–168 (GAS) and Ile232 contribute to the NADP(+) site.

It belongs to the tetrahydrofolate dehydrogenase/cyclohydrolase family. Homodimer.

The catalysed reaction is (6R)-5,10-methylene-5,6,7,8-tetrahydrofolate + NADP(+) = (6R)-5,10-methenyltetrahydrofolate + NADPH. It catalyses the reaction (6R)-5,10-methenyltetrahydrofolate + H2O = (6R)-10-formyltetrahydrofolate + H(+). It functions in the pathway one-carbon metabolism; tetrahydrofolate interconversion. In terms of biological role, catalyzes the oxidation of 5,10-methylenetetrahydrofolate to 5,10-methenyltetrahydrofolate and then the hydrolysis of 5,10-methenyltetrahydrofolate to 10-formyltetrahydrofolate. The sequence is that of Bifunctional protein FolD from Shewanella woodyi (strain ATCC 51908 / MS32).